Here is a 154-residue protein sequence, read N- to C-terminus: Ribonuclease H (154 aa).

The 141-residue stretch at 1 to 141 folds into the RNase H type-1 domain; that stretch reads MKRIEAYTDG…ADELAREGME (141 aa). Residues Asp9, Glu47, Asp69, and Asp133 each contribute to the Mg(2+) site.

Belongs to the RNase H family. In terms of assembly, monomer. Requires Mg(2+) as cofactor.

It is found in the cytoplasm. The catalysed reaction is Endonucleolytic cleavage to 5'-phosphomonoester.. Its function is as follows. Endonuclease that specifically degrades the RNA of RNA-DNA hybrids. The sequence is that of Ribonuclease H from Brucella anthropi (strain ATCC 49188 / DSM 6882 / CCUG 24695 / JCM 21032 / LMG 3331 / NBRC 15819 / NCTC 12168 / Alc 37) (Ochrobactrum anthropi).